A 618-amino-acid chain; its full sequence is Probable protein disulfide-isomerase A4 (618 aa).

A signal peptide spans M1–S21. Thioredoxin domains lie at T22–D139, V138–K254, and S480–V609. Cystine bridges form between C65–C68, C176–C179, and C529–C532. The Prevents secretion from ER signature appears at K615–L618.

This sequence belongs to the protein disulfide isomerase family.

It is found in the endoplasmic reticulum lumen. It catalyses the reaction Catalyzes the rearrangement of -S-S- bonds in proteins.. The protein is Probable protein disulfide-isomerase A4 of Caenorhabditis elegans.